A 604-amino-acid polypeptide reads, in one-letter code: NADP-dependent malic enzyme, mitochondrial (604 aa).

The interval 29–50 is disordered; sequence APAQGCHSKPGPARPVPLKKRG. Catalysis depends on Tyr137, which acts as the Proton donor. Arg190 lines the NAD(+) pocket. The active-site Proton acceptor is Lys208. Glu280, Asp281, and Asp304 together coordinate a divalent metal cation. Residue Asp304 coordinates NAD(+). Ser371 bears the Phosphoserine mark. Asn443 lines the NAD(+) pocket.

The protein belongs to the malic enzymes family. The cofactor is Mg(2+). Mn(2+) is required as a cofactor. In terms of tissue distribution, expressed predominantly in organs with a low-division rate.

It localises to the mitochondrion matrix. The enzyme catalyses (S)-malate + NADP(+) = pyruvate + CO2 + NADPH. The catalysed reaction is oxaloacetate + H(+) = pyruvate + CO2. In terms of biological role, catalyzes the oxidative decarboxylation of (S)-malate to pyruvate using NADP(+) as a cofactor. Can also reverse the decarboxylation reaction, but only with significantly lower efficiency. The polypeptide is NADP-dependent malic enzyme, mitochondrial (Homo sapiens (Human)).